The chain runs to 417 residues: Serine hydroxymethyltransferase (417 aa).

Residues leucine 121 and 125-127 contribute to the (6S)-5,6,7,8-tetrahydrofolate site; that span reads GHL. At lysine 229 the chain carries N6-(pyridoxal phosphate)lysine. 355 to 357 is a binding site for (6S)-5,6,7,8-tetrahydrofolate; sequence SPF.

The protein belongs to the SHMT family. Homodimer. The cofactor is pyridoxal 5'-phosphate.

The protein resides in the cytoplasm. The enzyme catalyses (6R)-5,10-methylene-5,6,7,8-tetrahydrofolate + glycine + H2O = (6S)-5,6,7,8-tetrahydrofolate + L-serine. The protein operates within one-carbon metabolism; tetrahydrofolate interconversion. Its pathway is amino-acid biosynthesis; glycine biosynthesis; glycine from L-serine: step 1/1. Its function is as follows. Catalyzes the reversible interconversion of serine and glycine with tetrahydrofolate (THF) serving as the one-carbon carrier. This reaction serves as the major source of one-carbon groups required for the biosynthesis of purines, thymidylate, methionine, and other important biomolecules. Also exhibits THF-independent aldolase activity toward beta-hydroxyamino acids, producing glycine and aldehydes, via a retro-aldol mechanism. The polypeptide is Serine hydroxymethyltransferase (Stenotrophomonas maltophilia (strain R551-3)).